Here is a 267-residue protein sequence, read N- to C-terminus: Large ribosomal subunit protein bL9m (267 aa).

A mitochondrion-targeting transit peptide spans Met-1 to Gly-52.

The protein belongs to the bacterial ribosomal protein bL9 family. Component of the mitochondrial large ribosomal subunit (mt-LSU). Mature mammalian 55S mitochondrial ribosomes consist of a small (28S) and a large (39S) subunit. The 28S small subunit contains a 12S ribosomal RNA (12S mt-rRNA) and 30 different proteins. The 39S large subunit contains a 16S rRNA (16S mt-rRNA), a copy of mitochondrial valine transfer RNA (mt-tRNA(Val)), which plays an integral structural role, and 52 different proteins.

Its subcellular location is the mitochondrion. This is Large ribosomal subunit protein bL9m (MRPL9) from Homo sapiens (Human).